Reading from the N-terminus, the 980-residue chain is Putative formate dehydrogenase YrhE (980 aa).

The region spanning 5–81 (KSISVRVDGT…GMSIDLSGNR (77 aa)) is the 2Fe-2S ferredoxin-type domain. Positions 39, 50, 53, and 65 each coordinate [2Fe-2S] cluster. In terms of domain architecture, 4Fe-4S His(Cys)3-ligated-type spans 81–121 (RVKEAQTEAMDRLLENHLLYCTVCDNNNGNCTLHNTAEMMG). Residues His97, Cys101, Cys104, Cys111, Cys153, Cys156, Cys159, Cys163, Cys196, Cys199, Cys202, Cys206, Cys270, Cys273, Cys277, and Cys305 each contribute to the [4Fe-4S] cluster site. 2 4Fe-4S ferredoxin-type domains span residues 144 to 171 (PFYR…VNET) and 187 to 216 (EGVP…EKSM). The tract at residues 258-980 (MRETRTKKTK…NRPGYVHLTD (723 aa)) is formate dehydrogenase. Residues 263–319 (TKKTKTVCTFCGVGCSFEVWTKGRDILKIQPVSDAPVNAISTCVKGKFGWDFVNSKE) enclose the 4Fe-4S Mo/W bis-MGD-type domain. The interval 944-980 (ETAPLPKTNPRNKKRHPQNGVEAERKWNRPGYVHLTD) is disordered.

In the C-terminal section; belongs to the prokaryotic molybdopterin-containing oxidoreductase family. [2Fe-2S] cluster serves as cofactor. The cofactor is [4Fe-4S] cluster. It depends on Mo-bis(molybdopterin guanine dinucleotide) as a cofactor.

The catalysed reaction is formate + NAD(+) = CO2 + NADH. This is Putative formate dehydrogenase YrhE (yrhE) from Bacillus subtilis (strain 168).